Consider the following 348-residue polypeptide: Dihydroorotase (348 aa).

Residues His-14 and His-16 each coordinate Zn(2+). Substrate-binding positions include 16–18 (HLR) and Asn-42. The Zn(2+) site is built by Lys-100, His-137, and His-175. Lys-100 is subject to N6-carboxylysine. His-137 is a substrate binding site. Residue Leu-220 coordinates substrate. Residue Asp-248 coordinates Zn(2+). Residue Asp-248 is part of the active site. Residues His-252 and Ala-264 each contribute to the substrate site.

It belongs to the metallo-dependent hydrolases superfamily. DHOase family. Class II DHOase subfamily. In terms of assembly, homodimer. Zn(2+) serves as cofactor.

It catalyses the reaction (S)-dihydroorotate + H2O = N-carbamoyl-L-aspartate + H(+). It participates in pyrimidine metabolism; UMP biosynthesis via de novo pathway; (S)-dihydroorotate from bicarbonate: step 3/3. In terms of biological role, catalyzes the reversible cyclization of carbamoyl aspartate to dihydroorotate. In Pseudomonas fluorescens (strain ATCC BAA-477 / NRRL B-23932 / Pf-5), this protein is Dihydroorotase.